Reading from the N-terminus, the 349-residue chain is MSLKDLINKNLSHWVAGQGPERDIVLSSRIRLARNLDTIPYPNRADKDSKEEVTKRVLDATSKQGKIKLHYIKMDDLPEVEREVLVEKHLISPAHAKAGEGKGVLLNDNETISIMINEEDHLRLQVLIPGLQLEGAWETASELDDLLEEKLDFAFSQKWGYLSACPTNVGTGLRASVMVHLPALNLTNNINKMLGAISKVGLTVRGIYGEGSEYVGNLYQISNQVTLGHTEKEIIANLKSVTSQIIEQERQARNLLLKEKEIEVRDRVNRSFGILSHAYQISSEEALRMLSNVKLGIDMGIITDVDTGVLSELMVLIRPAHLQKLEGKELTPTERDIKRAELIKTRLNM.

The Phosphagen kinase C-terminal domain occupies 24–252 (IVLSSRIRLA…SQIIEQERQA (229 aa)). Residues 27–31 (SSRIR), His-89, Arg-123, 174–178 (RASVM), and 205–210 (RGIYGE) each bind ATP. The RDXXRA motif of the pArg binding pocket involved in allosteric regulation motif lies at 335–340 (RDIKRA).

The protein belongs to the ATP:guanido phosphotransferase family.

It catalyses the reaction L-arginyl-[protein] + ATP = N(omega)-phospho-L-arginyl-[protein] + ADP + H(+). With respect to regulation, appears to be allosterically activated by the binding of pArg-containing polypeptides to the pArg-binding pocket localized in the C-terminal domain of McsB. Its function is as follows. Catalyzes the specific phosphorylation of arginine residues in proteins. The sequence is that of Protein-arginine kinase from Halothermothrix orenii (strain H 168 / OCM 544 / DSM 9562).